The chain runs to 391 residues: Ferrochelatase (391 aa).

Histidine 196 and glutamate 281 together coordinate Fe cation.

This sequence belongs to the ferrochelatase family.

It localises to the cytoplasm. The enzyme catalyses heme b + 2 H(+) = protoporphyrin IX + Fe(2+). The protein operates within porphyrin-containing compound metabolism; protoheme biosynthesis; protoheme from protoporphyrin-IX: step 1/1. Functionally, catalyzes the ferrous insertion into protoporphyrin IX. The polypeptide is Ferrochelatase (Prochlorococcus marinus (strain NATL1A)).